Consider the following 282-residue polypeptide: Lipoyl synthase (282 aa).

Positions 37, 42, 48, 63, 67, 70, and 274 each coordinate [4Fe-4S] cluster. Residues 49-263 enclose the Radical SAM core domain; that stretch reads WGKGTATFMI…KTIGLEKGFS (215 aa).

The protein belongs to the radical SAM superfamily. Lipoyl synthase family. The cofactor is [4Fe-4S] cluster.

It is found in the cytoplasm. The enzyme catalyses [[Fe-S] cluster scaffold protein carrying a second [4Fe-4S](2+) cluster] + N(6)-octanoyl-L-lysyl-[protein] + 2 oxidized [2Fe-2S]-[ferredoxin] + 2 S-adenosyl-L-methionine + 4 H(+) = [[Fe-S] cluster scaffold protein] + N(6)-[(R)-dihydrolipoyl]-L-lysyl-[protein] + 4 Fe(3+) + 2 hydrogen sulfide + 2 5'-deoxyadenosine + 2 L-methionine + 2 reduced [2Fe-2S]-[ferredoxin]. It functions in the pathway protein modification; protein lipoylation via endogenous pathway; protein N(6)-(lipoyl)lysine from octanoyl-[acyl-carrier-protein]: step 2/2. Its function is as follows. Catalyzes the radical-mediated insertion of two sulfur atoms into the C-6 and C-8 positions of the octanoyl moiety bound to the lipoyl domains of lipoate-dependent enzymes, thereby converting the octanoylated domains into lipoylated derivatives. This is Lipoyl synthase from Bacteroides thetaiotaomicron (strain ATCC 29148 / DSM 2079 / JCM 5827 / CCUG 10774 / NCTC 10582 / VPI-5482 / E50).